The chain runs to 117 residues: Large ribosomal subunit protein bL20 (117 aa).

It belongs to the bacterial ribosomal protein bL20 family.

In terms of biological role, binds directly to 23S ribosomal RNA and is necessary for the in vitro assembly process of the 50S ribosomal subunit. It is not involved in the protein synthesizing functions of that subunit. This Citrifermentans bemidjiense (strain ATCC BAA-1014 / DSM 16622 / JCM 12645 / Bem) (Geobacter bemidjiensis) protein is Large ribosomal subunit protein bL20.